The chain runs to 230 residues: Response regulator MprA (230 aa).

The Response regulatory domain occupies 4-118; that stretch reads RILVVDDDRA…ELLARMRALL (115 aa). Asp-48 is modified (4-aspartylphosphate). Positions 129–227 form a DNA-binding region, ompR/PhoB-type; that stretch reads SPALTFLDLT…VRGVGYVLRE (99 aa).

In terms of processing, phosphorylated and dephosphorylated by MprB.

It is found in the cytoplasm. Its function is as follows. Member of the two-component regulatory system MprB/MprA which contributes to maintaining a balance among several systems involved in stress resistance and is required for establishment and maintenance of persistent infection in the host. Functions as a transcriptional regulator that recognizes a 19-bp nucleotide motif comprizing two loosely conserved 8-bp direct DNA-binding motif repeats separated by a 3-bp spacer region. The protein is Response regulator MprA (mprA) of Mycobacterium sp. (strain JLS).